Consider the following 333-residue polypeptide: Complement C1q and tumor necrosis factor-related protein 9A (333 aa).

A signal peptide spans 1–19 (MRIWWLLLAIEICTGNINS). Collagen-like domains follow at residues 24–82 (RQGH…DGKV), 95–154 (GSPG…PGPM), and 155–191 (GPIG…GEKG). The disordered stretch occupies residues 24-188 (RQGHPGIPGN…GIRGWKGDRG (165 aa)). The segment covering 26 to 40 (GHPGIPGNPGHNGLP) has biased composition (low complexity). 4-hydroxyproline is present on residues Pro31, Pro34, and Pro40. The segment covering 42–57 (RDGRDGAKGDKGDAGE) has biased composition (basic and acidic residues). A 4-hydroxyproline mark is found at Pro58, Pro61, and Pro64. Over residues 69–88 (TSGEKGERGADGKVEAKGIK) the composition is skewed to basic and acidic residues. 5-hydroxylysine is present on residues Lys73 and Lys127. Residues Lys73 and Lys127 are each glycosylated (O-linked (Gal...) hydroxylysine). Pro151, Pro160, and Pro175 each carry 4-hydroxyproline. The region spanning 197 to 333 (LVLPKSAFTV…FTGFLLFSSP (137 aa)) is the C1q domain.

Multimers (predominantly trimers). Interacts with ADIPOQ via the C1q domain to form a heterotrimeric complex. Interacts with CTRP9B. Forms heterotrimers and heterooligomeric complexes with CTRP9B. As to expression, expressed predominantly in adipose tissue.

It is found in the secreted. Probable adipokine. Activates AMPK, AKT, and p44/42 MAPK signaling pathways. The protein is Complement C1q and tumor necrosis factor-related protein 9A (C1QTNF9) of Homo sapiens (Human).